Reading from the N-terminus, the 953-residue chain is ATP-dependent 6-phosphofructokinase (953 aa).

Positions 1 to 558 are N-terminal catalytic PFK domain 1; the sequence is MIEGISFASF…QLQGFLLTNS (558 aa). Residues Gly193, 256–257, and 286–289 contribute to the ATP site; these read RC and GDGS. Mg(2+) is bound at residue Asp287. Residues 332-334, Arg369, 376-378, Glu433, Arg460, and 466-469 each bind substrate; these read SID, MGR, and HVQR. The Proton acceptor role is filled by Asp334. Residues 559–572 form an interdomain linker region; that stretch reads ADKDRPQEPAKDPL. Residues 573-953 form a C-terminal regulatory PFK domain 2 region; it reads RVAIVCTGAP…AKEQGIIDPC (381 aa). Beta-D-fructose 2,6-bisphosphate contacts are provided by residues Arg645, 702–706, Arg740, 747–749, Glu807, Arg833, 839–842, and Arg906; these read TISNN, QGG, and HVQQ.

It belongs to the phosphofructokinase type A (PFKA) family. ATP-dependent PFK group I subfamily. Eukaryotic two domain clade 'E' sub-subfamily. As to quaternary structure, heterooctamer of 4 alpha and 4 beta chains. Requires Mg(2+) as cofactor.

The protein resides in the cytoplasm. It catalyses the reaction beta-D-fructose 6-phosphate + ATP = beta-D-fructose 1,6-bisphosphate + ADP + H(+). It functions in the pathway carbohydrate degradation; glycolysis; D-glyceraldehyde 3-phosphate and glycerone phosphate from D-glucose: step 3/4. Its activity is regulated as follows. Allosterically activated by ADP, AMP, or fructose 2,6-bisphosphate, and allosterically inhibited by ATP or citrate. Functionally, catalyzes the phosphorylation of D-fructose 6-phosphate to fructose 1,6-bisphosphate by ATP, the first committing step of glycolysis. This chain is ATP-dependent 6-phosphofructokinase (PFK1), found in Yarrowia lipolytica (strain CLIB 122 / E 150) (Yeast).